Consider the following 64-residue polypeptide: Large ribosomal subunit protein bL35 (64 aa).

The protein belongs to the bacterial ribosomal protein bL35 family.

The polypeptide is Large ribosomal subunit protein bL35 (Clavibacter michiganensis subsp. michiganensis (strain NCPPB 382)).